The primary structure comprises 364 residues: Coproporphyrin III ferrochelatase (364 aa).

The Fe-coproporphyrin III site is built by R29 and Y118. H169 and E250 together coordinate Fe(2+).

The protein belongs to the ferrochelatase family.

The protein resides in the cytoplasm. The enzyme catalyses Fe-coproporphyrin III + 2 H(+) = coproporphyrin III + Fe(2+). It functions in the pathway porphyrin-containing compound metabolism; protoheme biosynthesis. Functionally, involved in coproporphyrin-dependent heme b biosynthesis. Catalyzes the insertion of ferrous iron into coproporphyrin III to form Fe-coproporphyrin III. The polypeptide is Coproporphyrin III ferrochelatase (Streptococcus pneumoniae (strain ATCC 700669 / Spain 23F-1)).